We begin with the raw amino-acid sequence, 1366 residues long: Collagen alpha-2(I) chain (1366 aa).

Positions M1–C22 are cleaved as a signal peptide. Q23 is modified (pyrrolidone carboxylic acid). The propeptide at Q23 to A79 is N-terminal propeptide. The tract at residues E27 to K1131 is disordered. The segment covering P34–R44 has biased composition (basic and acidic residues). Pro residues predominate over residues P59 to P71. At K84 the chain carries Allysine. Residues K84–G94 are compositionally biased toward gly residues. Residues L95–R132 show a composition bias toward low complexity. Basic and acidic residues predominate over residues A141 to E155. At K177 the chain carries 5-hydroxylysine; alternate. K177 is a glycosylation site (O-linked (Gal...) hydroxylysine; alternate). 8 stretches are compositionally biased toward low complexity: residues V225–P254, A279–P293, P300–P321, P330–V345, N384–P408, R423–P434, L470–P489, and A513–Q531. Gly residues predominate over residues G538–G547. Residues P594–P611 are compositionally biased toward low complexity. Residues G634 to G643 are compositionally biased toward gly residues. 2 stretches are compositionally biased toward low complexity: residues N668 to T690 and V717 to A737. Residues K738–K747 are compositionally biased toward basic and acidic residues. The span at T756–S765 shows a compositional bias: low complexity. The segment covering G775–G784 has biased composition (gly residues). Low complexity-rich tracts occupy residues A785–T795, P863–P876, E893–N932, P951–K974, and P981–P1001. Basic and acidic residues predominate over residues R1005 to P1016. Positions A1089–P1103 are enriched in pro residues. Residues D1120 to K1366 constitute a propeptide, C-terminal propeptide. The region spanning Y1133–K1366 is the Fibrillar collagen NC1 domain. Cystine bridges form between C1163–C1195, C1203–C1364, and C1272–C1317. Ca(2+) contacts are provided by D1181, N1183, Q1184, C1186, and D1189.

The protein belongs to the fibrillar collagen family. In terms of assembly, trimers of one alpha 2(I) and two alpha 1(I) chains. Interacts (via C-terminus) with TMEM131 (via PapD-L domain); the interaction is direct and is involved in assembly and TRAPPIII ER-to-Golgi transport complex-dependent secretion of collagen. Post-translationally, prolines at the third position of the tripeptide repeating unit (G-X-Y) are hydroxylated in some or all of the chains. In terms of tissue distribution, forms the fibrils of tendon, ligaments and bones. In bones the fibrils are mineralized with calcium hydroxyapatite.

It localises to the secreted. Its subcellular location is the extracellular space. It is found in the extracellular matrix. Its function is as follows. Type I collagen is a member of group I collagen (fibrillar forming collagen). This is Collagen alpha-2(I) chain (COL1A2) from Canis lupus familiaris (Dog).